The following is a 397-amino-acid chain: Tryptophan synthase beta chain (397 aa).

N6-(pyridoxal phosphate)lysine is present on lysine 86.

Belongs to the TrpB family. As to quaternary structure, tetramer of two alpha and two beta chains. Pyridoxal 5'-phosphate serves as cofactor.

It carries out the reaction (1S,2R)-1-C-(indol-3-yl)glycerol 3-phosphate + L-serine = D-glyceraldehyde 3-phosphate + L-tryptophan + H2O. The protein operates within amino-acid biosynthesis; L-tryptophan biosynthesis; L-tryptophan from chorismate: step 5/5. Its function is as follows. The beta subunit is responsible for the synthesis of L-tryptophan from indole and L-serine. The chain is Tryptophan synthase beta chain from Aeromonas salmonicida (strain A449).